Here is a 198-residue protein sequence, read N- to C-terminus: Succinate dehydrogenase [ubiquinone] cytochrome b subunit, mitochondrial (198 aa).

The N-terminal 50 residues, 1–50 (MSAMMVKLGLNKSALLLKPSAFSRAAALSSSRRLLFNTARTNFLSTSPLK), are a transit peptide targeting the mitochondrion. Over 51 to 99 (NVASEMNTKAAIAEEQILNKQRAKRPISPHLTIYQPQLTWYLSSLHRIS) the chain is Mitochondrial matrix. 2 residues coordinate a ubiquinone: Ser-93 and Arg-97. Residues 100 to 120 (LVLMGLGFYLFTILFGVSGLL) form a helical membrane-spanning segment. The Mitochondrial intermembrane portion of the chain corresponds to 121 to 139 (GLGLTTEKVSNWYHQKFSK). The chain crosses the membrane as a helical span at residues 140-160 (ITEWSIKGSFAYLFAIHYGGA). Heme is bound at residue His-156. Over 161–175 (IRHLIWDTAKELTLK) the chain is Mitochondrial matrix. The chain crosses the membrane as a helical span at residues 176–196 (GVYRTGYALIGFTAVLGTYLL). Over 197–198 (TL) the chain is Mitochondrial intermembrane.

Belongs to the cytochrome b560 family. As to quaternary structure, forms part of complex II containing four subunits: a flavoprotein (FP), an iron-sulfur protein (IP) and a cytochrome b composed of two integral membrane proteins. Requires heme as cofactor.

The protein resides in the mitochondrion inner membrane. Its pathway is carbohydrate metabolism; tricarboxylic acid cycle. Its function is as follows. Membrane-anchoring mono-heme cytochrome b subunit of succinate dehydrogenase (SDH) that is involved in system II of the mitochondrial electron transport chain and is responsible for transferring electrons from succinate to ubiquinone (coenzyme Q). SDH3 and SDH4 form the membrane dimer that anchors the catalytic dimer formed by SDH1 and SDH2 to the matrix surface of the mitochondrial inner membrane. Electrons originating from the catalytic dimer enter the membrane dimer for ubiquinone reduction. The chain is Succinate dehydrogenase [ubiquinone] cytochrome b subunit, mitochondrial (SDH3) from Saccharomyces cerevisiae (strain ATCC 204508 / S288c) (Baker's yeast).